A 291-amino-acid chain; its full sequence is ATP synthase gamma chain (291 aa).

This sequence belongs to the ATPase gamma chain family. F-type ATPases have 2 components, CF(1) - the catalytic core - and CF(0) - the membrane proton channel. CF(1) has five subunits: alpha(3), beta(3), gamma(1), delta(1), epsilon(1). CF(0) has three main subunits: a, b and c.

It is found in the cell inner membrane. Produces ATP from ADP in the presence of a proton gradient across the membrane. The gamma chain is believed to be important in regulating ATPase activity and the flow of protons through the CF(0) complex. The protein is ATP synthase gamma chain of Cupriavidus metallidurans (strain ATCC 43123 / DSM 2839 / NBRC 102507 / CH34) (Ralstonia metallidurans).